Here is a 279-residue protein sequence, read N- to C-terminus: Energy-coupling factor transporter ATP-binding protein EcfA2 (279 aa).

In terms of domain architecture, ABC transporter spans 3–245 (IALENVNFIY…VVFMEEVQLG (243 aa)). An ATP-binding site is contributed by 40-47 (GHTGSGKS).

The protein belongs to the ABC transporter superfamily. Energy-coupling factor EcfA family. In terms of assembly, forms a stable energy-coupling factor (ECF) transporter complex composed of 2 membrane-embedded substrate-binding proteins (S component), 2 ATP-binding proteins (A component) and 2 transmembrane proteins (T component).

The protein localises to the cell membrane. In terms of biological role, ATP-binding (A) component of a common energy-coupling factor (ECF) ABC-transporter complex. Unlike classic ABC transporters this ECF transporter provides the energy necessary to transport a number of different substrates. This Streptococcus pneumoniae serotype 2 (strain D39 / NCTC 7466) protein is Energy-coupling factor transporter ATP-binding protein EcfA2.